Consider the following 248-residue polypeptide: MNVLISNDDGYLAEGIAILARVASEFANVRVVAPERDRSGVSNSVTLDRPLQLKQAQNGFYYVNGTPTDCIHVGQFALPDFKPDVVFSGINRGANMGDDTLYSGTVAAATEAYLMGMPAVAFSLNDASGRYWATAEKALWTLLAHFFKKPPSAPVLWNVNIPAVAPEDVRGIKITRLGRRHHEQNIVPSRNPRGEQIYWIGPVGEVSDREEGTDFGECGAGFITVTPLQIDLTAYPDMAETAAFWHTD.

A divalent metal cation contacts are provided by D8, D9, S39, and N91.

The protein belongs to the SurE nucleotidase family. The cofactor is a divalent metal cation.

It is found in the cytoplasm. It carries out the reaction a ribonucleoside 5'-phosphate + H2O = a ribonucleoside + phosphate. Its function is as follows. Nucleotidase that shows phosphatase activity on nucleoside 5'-monophosphates. In Neisseria gonorrhoeae (strain ATCC 700825 / FA 1090), this protein is 5'-nucleotidase SurE.